Consider the following 335-residue polypeptide: Biotin synthase (335 aa).

A Radical SAM core domain is found at 51–281 (YRVQLASLLS…RSRVRLSAGR (231 aa)). Cys-66, Cys-70, and Cys-73 together coordinate [4Fe-4S] cluster. Residues Cys-112, Cys-144, Cys-204, and Arg-276 each contribute to the [2Fe-2S] cluster site.

It belongs to the radical SAM superfamily. Biotin synthase family. In terms of assembly, homodimer. It depends on [4Fe-4S] cluster as a cofactor. [2Fe-2S] cluster serves as cofactor.

The catalysed reaction is (4R,5S)-dethiobiotin + (sulfur carrier)-SH + 2 reduced [2Fe-2S]-[ferredoxin] + 2 S-adenosyl-L-methionine = (sulfur carrier)-H + biotin + 2 5'-deoxyadenosine + 2 L-methionine + 2 oxidized [2Fe-2S]-[ferredoxin]. It participates in cofactor biosynthesis; biotin biosynthesis; biotin from 7,8-diaminononanoate: step 2/2. Functionally, catalyzes the conversion of dethiobiotin (DTB) to biotin by the insertion of a sulfur atom into dethiobiotin via a radical-based mechanism. This chain is Biotin synthase, found in Prochlorococcus marinus (strain MIT 9303).